The sequence spans 588 residues: Aspartate--tRNA ligase (588 aa).

E174 contacts L-aspartate. The interval 198–201 is aspartate; the sequence is QLFK. R220 serves as a coordination point for L-aspartate. Residues 220–222 and Q229 each bind ATP; that span reads RDE. H448 provides a ligand contact to L-aspartate. Residue E482 participates in ATP binding. R489 serves as a coordination point for L-aspartate. Residue 534 to 537 participates in ATP binding; it reads GIDR.

It belongs to the class-II aminoacyl-tRNA synthetase family. Type 1 subfamily. In terms of assembly, homodimer.

The protein resides in the cytoplasm. The enzyme catalyses tRNA(Asp) + L-aspartate + ATP = L-aspartyl-tRNA(Asp) + AMP + diphosphate. Functionally, catalyzes the attachment of L-aspartate to tRNA(Asp) in a two-step reaction: L-aspartate is first activated by ATP to form Asp-AMP and then transferred to the acceptor end of tRNA(Asp). The protein is Aspartate--tRNA ligase of Xanthomonas campestris pv. campestris (strain B100).